The primary structure comprises 77 residues: Dermatoxin-DA1 (77 aa).

The first 22 residues, 1-22 (MAFLKKSLFLVLFLGLVPLFLC), serve as a signal peptide directing secretion. A propeptide spanning residues 23–42 (ENEKREGENEKEENDDQSEE) is cleaved from the precursor. Lys-76 is modified (lysine amide).

The protein belongs to the frog skin active peptide (FSAP) family. Dermatoxin subfamily. In terms of tissue distribution, expressed by the skin glands.

The protein localises to the secreted. Functionally, possesses a potent antimicrobial activity against Gram-positive and Gram-negative bacteria. Probably acts by disturbing membrane functions with its amphipathic structure. This is Dermatoxin-DA1 from Agalychnis dacnicolor (Giant Mexican leaf frog).